Reading from the N-terminus, the 185-residue chain is Adenine phosphoribosyltransferase (185 aa).

This sequence belongs to the purine/pyrimidine phosphoribosyltransferase family. Homodimer.

The protein resides in the cytoplasm. The catalysed reaction is AMP + diphosphate = 5-phospho-alpha-D-ribose 1-diphosphate + adenine. It participates in purine metabolism; AMP biosynthesis via salvage pathway; AMP from adenine: step 1/1. Functionally, catalyzes a salvage reaction resulting in the formation of AMP, that is energically less costly than de novo synthesis. This is Adenine phosphoribosyltransferase from Corynebacterium glutamicum (strain ATCC 13032 / DSM 20300 / JCM 1318 / BCRC 11384 / CCUG 27702 / LMG 3730 / NBRC 12168 / NCIMB 10025 / NRRL B-2784 / 534).